We begin with the raw amino-acid sequence, 406 residues long: Imidazolonepropionase (406 aa).

Residues His-65 and His-67 each contribute to the Fe(3+) site. Zn(2+) contacts are provided by His-65 and His-67. Residues Arg-74, Tyr-137, and His-170 each contribute to the 4-imidazolone-5-propanoate site. Tyr-137 contacts N-formimidoyl-L-glutamate. His-235 contacts Fe(3+). His-235 is a Zn(2+) binding site. Position 238 (Gln-238) interacts with 4-imidazolone-5-propanoate. Position 310 (Asp-310) interacts with Fe(3+). Asp-310 is a Zn(2+) binding site. N-formimidoyl-L-glutamate-binding residues include Asn-312 and Gly-314. Thr-315 is a binding site for 4-imidazolone-5-propanoate.

The protein belongs to the metallo-dependent hydrolases superfamily. HutI family. Zn(2+) serves as cofactor. The cofactor is Fe(3+).

The protein resides in the cytoplasm. It carries out the reaction 4-imidazolone-5-propanoate + H2O = N-formimidoyl-L-glutamate. It functions in the pathway amino-acid degradation; L-histidine degradation into L-glutamate; N-formimidoyl-L-glutamate from L-histidine: step 3/3. In terms of biological role, catalyzes the hydrolytic cleavage of the carbon-nitrogen bond in imidazolone-5-propanoate to yield N-formimidoyl-L-glutamate. It is the third step in the universal histidine degradation pathway. The chain is Imidazolonepropionase from Vibrio vulnificus (strain CMCP6).